We begin with the raw amino-acid sequence, 471 residues long: Putative multidrug resistance protein MdtD (471 aa).

The Periplasmic segment spans residues 1-11 (MTDLPDSTRWQ). The chain crosses the membrane as a helical span at residues 12–32 (LWIVAFGFFMQSLDTTIVNTA). Over 33–48 (LPSMAQSLGESPLHMH) the chain is Cytoplasmic. A helical membrane pass occupies residues 49-69 (MVIVSYVLTVAVMLPASGWLA). Over 70–76 (DKVGVRN) the chain is Periplasmic. A helical membrane pass occupies residues 77–97 (IFFTAIVLFTLGSLFCALSGT). Topologically, residues 98–101 (LNEL) are cytoplasmic. The chain crosses the membrane as a helical span at residues 102-124 (LLARALQGVGGAMMVPVGRLTVM). Residues 125–137 (KIVPREQYMAAMT) are Periplasmic-facing. A helical transmembrane segment spans residues 138-158 (FVTLPGQIGPLLGPALGGLLV). Topologically, residues 159–164 (EYASWH) are cytoplasmic. The chain crosses the membrane as a helical span at residues 165–185 (WIFLINIPVGIIGAITTLMLM). Topologically, residues 186–196 (PNYTMQTRRFD) are periplasmic. The chain crosses the membrane as a helical span at residues 197–217 (LSGFLLLAVGMAVLTLALDGS). Over 218–224 (KGTGFSP) the chain is Cytoplasmic. Residues 225 to 245 (LAIAGLVAVGVVALVLYLLHA) form a helical membrane-spanning segment. The Periplasmic segment spans residues 246–262 (QNNNRALFSLKLFRTRT). Residues 263 to 283 (FSLGLAGSFAGRIGSGMLPFM) form a helical membrane-spanning segment. Over 284 to 285 (TP) the chain is Cytoplasmic. The helical transmembrane segment at 286–306 (VFLQIGFGFSPFHAGLMMIPM) threads the bilayer. At 307–341 (VLGSMGMKRIVVQVVNRFGYRRVLVATTLGLSLVT) the chain is on the periplasmic side. A helical transmembrane segment spans residues 342 to 362 (LLFMTTALLGWYYVLPFVLFL). Over 363-395 (QGMVNSTRFSSMNTLTLKDLPDNLASSGNSLLS) the chain is Cytoplasmic. A helical membrane pass occupies residues 396 to 416 (MIMQLSMSIGVTIAGLLLGLF). Topologically, residues 417–430 (GSQHVSVDSGTTQT) are periplasmic. The helical transmembrane segment at 431 to 451 (VFMYTWLSMASIIALPAFIFA) threads the bilayer. The Cytoplasmic portion of the chain corresponds to 452–471 (RVPNDTHQNVAISRRKRSAQ).

It belongs to the major facilitator superfamily. TCR/Tet family.

The protein localises to the cell inner membrane. This chain is Putative multidrug resistance protein MdtD, found in Escherichia coli O6:H1 (strain CFT073 / ATCC 700928 / UPEC).